The primary structure comprises 438 residues: Battenin (438 aa).

The disordered stretch occupies residues 1–27; sequence MGSSAGSWRRLEDSEREETDSEPQAPR. Over 1–37 the chain is Cytoplasmic; that stretch reads MGSSAGSWRRLEDSEREETDSEPQAPRLDSRSVLWKN. The residue at position 14 (serine 14) is a Phosphoserine. The chain crosses the membrane as a helical span at residues 38–58; it reads AVGFWILGLCNNFSYVVMLSA. At 59–127 the chain is on the lumenal side; that stretch reads AHDILKQEQA…GLHLLPYSPR (69 aa). The tract at residues 67 to 87 is disordered; it reads QASGNQSHVEPGPTPTPHNSS. Residues asparagine 71 and asparagine 85 are each glycosylated (N-linked (GlcNAc...) asparagine). The chain crosses the membrane as a helical span at residues 128-148; it reads VLVSGVCSAGSFVLVAFSQSV. At 149–151 the chain is on the cytoplasmic side; the sequence is GLS. The helical transmembrane segment at 152–172 threads the bilayer; that stretch reads LCGVVLASISSGLGEVTFLSL. Residues 173–182 are Lumenal-facing; sequence TAFYPSAVIS. Residues 183–203 traverse the membrane as a helical segment; it reads WWSSGTGGAGLLGSLSYLGLT. Residues 204 to 277 are Cytoplasmic-facing; the sequence is QAGLSPQHTL…DLSLQERWTV (74 aa). The segment at 239–261 is disordered; it reads PGGENEAETAARQPLIGTETPES. A Lysosomal targeting motif motif is present at residues 242–244; it reads ENE. The Lysosomal targeting motif. Required for AP1G1, AP2A2 and AP3D1 interaction signature appears at 253-254; the sequence is LI. Residues 278-298 traverse the membrane as a helical segment; it reads FKGLLWYIIPLVLVYFAEYFI. Topologically, residues 299 to 346 are lumenal; it reads NQGLFELLFFRNTSLSHAQQYRWYQMLYQAGVFASRSSLQCCRIRFTW. The N-linked (GlcNAc...) asparagine glycan is linked to asparagine 310. Residues 347-367 traverse the membrane as a helical segment; sequence VLALLQCLNLALLLADVCLNF. At 368–438 the chain is on the cytoplasmic side; sequence LPSIYLIFII…PLHDFLCHLP (71 aa). Residues 409–419 carry the Lysosomal targeting motif motif; that stretch reads MEAACISDTLG. The residue at position 435 (cysteine 435) is a Cysteine methyl ester. A lipid anchor (S-farnesyl cysteine) is attached at cysteine 435. A propeptide spans 436 to 438 (removed in mature form); the sequence is HLP.

It belongs to the battenin family. Homooligomer. Interacts with DCTN1, KIF3A, RAB7A and RILP. Interacts with CLN5. Interacts with KCNIP3. In terms of processing, highly glycosylated. Farnesylation is important for trafficking to lysosomes. In terms of tissue distribution, expressed throughout the brain, such as, in the cerebral cortex, hippocampus, cerebellum and several different cerebral nuclei (at protein level). In the cerebral cortex, expressed in all cortical layers. In the hippocampus, expressed in the granule cells in the dentate gyrus and the pyramidal cells of the hippocampus proper. In the cerebellum expressed in the granular and molecular layers, and in the Purkinje cell layer.

The protein localises to the lysosome membrane. The protein resides in the late endosome. It is found in the lysosome. It localises to the membrane raft. Its subcellular location is the golgi apparatus. The protein localises to the trans-Golgi network. The protein resides in the synapse. It is found in the synaptosome. It localises to the early endosome membrane. Its subcellular location is the late endosome membrane. The protein localises to the cytoplasmic vesicle. The protein resides in the autophagosome. Mediates microtubule-dependent, anterograde transport connecting the Golgi network, endosomes, autophagosomes, lysosomes and plasma membrane, and participates in several cellular processes such as regulation of lysosomal pH, lysosome protein degradation, receptor-mediated endocytosis, autophagy, transport of proteins and lipids from the TGN, apoptosis and synaptic transmission. Facilitates the proteins transport from trans-Golgi network (TGN)-to other membrane compartments such as transport of microdomain-associated proteins to the plasma membrane, IGF2R transport to the lysosome where it regulates the CTSD release leading to regulation of CTSD maturation and thereby APP intracellular processing. Moreover regulates CTSD activity in response to osmotic stress. Also binds galactosylceramide and transports it from the trans Golgi to the rafts, which may have immediate and downstream effects on cell survival by modulating ceramide synthesis. At the plasma membrane, regulates actin-dependent events including filopodia formation, cell migration, and pinocytosis through ARF1-CDC42 pathway and also the cytoskeleton organization through interaction with MYH10 and fodrin leading to the regulation of the plasma membrane association of Na+, K+ ATPase complex. Regulates synaptic transmission in the amygdala, hippocampus, and cerebellum through regulation of synaptic vesicles density and their proximity to active zones leading to modulation of short-term plasticity and age-dependent anxious behavior, learning and memory. Regulates autophagic vacuoles (AVs) maturation by modulating the trafficking between endocytic and autophagolysosomal/lysosomal compartments, which involves vesicle fusion leading to regulation of degradation process. Also participates in cellular homeostasis of compounds such as, water, ions, amino acids, proteins and lipids in several tissue namely in brain and kidney through regulation of their transport and synthesis. The chain is Battenin from Mus musculus (Mouse).